Here is a 279-residue protein sequence, read N- to C-terminus: H-2 class II histocompatibility antigen gamma chain (279 aa).

The interval 1-23 (MDDQRDLISNHEQLPILGNRPRE) is disordered. Topologically, residues 1–29 (MDDQRDLISNHEQLPILGNRPREPERCSR) are cytoplasmic. Phosphoserine is present on Ser9. The chain crosses the membrane as a helical; Signal-anchor for type II membrane protein span at residues 30 to 55 (GALYTGVSVLVALLLAGQATTAYFLY). Residues 56–279 (QQQGRLDKLT…TRQELGQVTL (224 aa)) lie on the Extracellular side of the membrane. Residues Asn113 and Asn119 are each glycosylated (N-linked (GlcNAc...) asparagine). The region spanning 193 to 254 (LTKCQEEVSH…HTKSRGRHNC (62 aa)) is the Thyroglobulin type-1 domain. Intrachain disulfides connect Cys196-Cys215, Cys226-Cys233, and Cys235-Cys254. Ser265 carries O-linked (Xyl...) (chondroitin sulfate) serine glycosylation.

Nonamer composed of three alpha/beta/gamma heterotrimers. Interacts with CD44; this complex is essential for the MIF-induced signaling cascade that results in B cell survival. As to quaternary structure, interacts with the mature form of CTSL; the complex survive in neutral pH environment. Expressed in thymus and lymph noodes. Expressed by antigen-presenting cells (APCs). As to expression, expressed in thymus and lymph noodes.

It is found in the late endosome. The protein localises to the lysosome. Its subcellular location is the cell membrane. The protein resides in the endoplasmic reticulum membrane. It localises to the golgi apparatus. It is found in the trans-Golgi network. The protein localises to the endosome. Its subcellular location is the secreted. In terms of biological role, plays a critical role in MHC class II antigen processing by stabilizing peptide-free class II alpha/beta heterodimers in a complex soon after their synthesis and directing transport of the complex from the endoplasmic reticulum to compartments where peptide loading of class II takes place. Enhance also the stimulation of T-cell responses through interaction with CD44. Functionally, stabilizes the conformation of mature CTSL by binding to its active site and serving as a chaperone to help maintain a pool of mature enzyme in endocytic compartments and extracellular space of antigen-presenting cells (APCs). Binds to the peptide-binding site of MHC class II alpha/beta heterodimers forming an alpha-beta-CLIP complex, thereby preventing the loading of antigenic peptides to the MHC class II complex until its release by HLA-DM in the endosome. The polypeptide is H-2 class II histocompatibility antigen gamma chain (Mus musculus (Mouse)).